Here is a 718-residue protein sequence, read N- to C-terminus: MFNQHSVEIDWGGRPLKLETGKIARQADGAVVATYGETVVLATVVAAKSPREGVDFLPLTVDYQEKTYAAGRIPGGYFKREGRPTEKETLVSRLIDRPVRPLFADGWRNETQVIVTVLSHDMENDPDILAMVAASAALTLSGAPFKGPIGAARVGFINDEYVLNPTLDEIVDTQLDLVVAGTADAVLMVESEAKELSEEIMLKAVMFGHRHFQPVIDAIIELAEKAAKEPRELKVIDDTEIEKEMLGLVEQDLRAAYAIPVKQDRYAAVGKVKEKALAHFFPEGQEPKYDKLRVAGVFKELEAKIVRWNILDTGKRIDGRDVKTVRNIVAEAGVLPRAHGSALFTRGETQAMVVTTLGTGEDEQYIDSLAGTYKETFLLHYNFPPYSVGETGRLGGAKRREIGHGKLAWRAIRPVLPPHHEFPYTIRVVSEITESNGSSSMASVCGASLSLMDAGVPLKRPTAGIAMGLILEGERYAVLSDILGDEDHLGDMDFKVAGTEAGITSLQMDIKIAGITEEIMKVALGQAKDGRIHILGEMSKALDRARAELGEHAPRIETFKIPTDKIREVIGTGGKVIREIVEKTGAKVNIEDDGTVKVASSDGESIKAAIKWIKSIASDPEVGEIYEGTVVKVMEFGAFVNFFGAKDGLVHISQLAAGRVQKTSDVVKEGAKVKVKLLGFDDRGKTRLSMKVVDQETGEDLEAKQKAEGDAPREAAGE.

Mg(2+)-binding residues include Asp487 and Asp493. The region spanning 554–613 (PRIETFKIPTDKIREVIGTGGKVIREIVEKTGAKVNIEDDGTVKVASSDGESIKAAIKWI) is the KH domain. Residues 623–691 (GEIYEGTVVK…DRGKTRLSMK (69 aa)) form the S1 motif domain. The disordered stretch occupies residues 692 to 718 (VVDQETGEDLEAKQKAEGDAPREAAGE). Over residues 701–718 (LEAKQKAEGDAPREAAGE) the composition is skewed to basic and acidic residues.

Belongs to the polyribonucleotide nucleotidyltransferase family. Mg(2+) is required as a cofactor.

It localises to the cytoplasm. The catalysed reaction is RNA(n+1) + phosphate = RNA(n) + a ribonucleoside 5'-diphosphate. Its function is as follows. Involved in mRNA degradation. Catalyzes the phosphorolysis of single-stranded polyribonucleotides processively in the 3'- to 5'-direction. This is Polyribonucleotide nucleotidyltransferase from Nitrobacter winogradskyi (strain ATCC 25391 / DSM 10237 / CIP 104748 / NCIMB 11846 / Nb-255).